We begin with the raw amino-acid sequence, 1451 residues long: Copper-transporting ATPase 2 (1451 aa).

At 1-646 (MPEQERKVTA…KTEIKQWKKS (646 aa)) the chain is on the cytoplasmic side. HMA domains are found at residues 57-123 (TTGV…FEAS), 142-208 (AVVK…FEAA), and 256-322 (ATLP…PGYF). Cu(+) is bound by residues cysteine 68, cysteine 71, cysteine 153, cysteine 156, cysteine 267, and cysteine 270. The segment at 328–353 (DGLEKESGSSSVPSLGSSQRQQEPGP) is disordered. Residues 335–345 (GSSSVPSLGSS) show a composition bias toward low complexity. Residues 355-421 (RTAVLTITGI…AVEDMGFEVS (67 aa)) form the HMA 4 domain. Serine 469, serine 471, and serine 474 each carry phosphoserine. HMA domains lie at 481–547 (QKCF…FEAA) and 557–623 (GDIE…FHAS). Residues cysteine 492, cysteine 495, cysteine 568, and cysteine 571 each contribute to the Cu(+) site. A helical membrane pass occupies residues 647-668 (FLCSLVFGIPVMGLMIYMLIPS). The Extracellular portion of the chain corresponds to 669 to 690 (SKPHETMVLDHNIIPGLSVLNL). A helical membrane pass occupies residues 691 to 710 (IFFILCTFVQFLGGWYFYVQ). The Cytoplasmic portion of the chain corresponds to 711 to 717 (AYKSLRH). Residues 718–738 (KSANMDVLIVLATTIAYAYSL) form a helical membrane-spanning segment. At 739-757 (VILVVAIAEKAEKSPVTFF) the chain is on the extracellular side. Residues 758 to 778 (DTPPMLFVFIALGRWLEHVAK) form a helical membrane-spanning segment. Residues 779-912 (SKTSEALAKL…KAPIQQLADR (134 aa)) are Cytoplasmic-facing. A helical membrane pass occupies residues 913-935 (FSGYFVPFIIIISTLTLVVWIII). The Extracellular portion of the chain corresponds to 936-965 (GFVDFGIVQKYFPSPSKHISQTEVIIRFAF). A helical transmembrane segment spans residues 966–987 (QTSITVLCIACPCSLGLATPTA). The Cytoplasmic segment spans residues 988 to 1310 (VMVGTGVAAQ…LSKRTVRRIR (323 aa)). Residue aspartate 1020 is the 4-aspartylphosphate intermediate of the active site. Residues aspartate 1255 and aspartate 1259 each coordinate Mg(2+). A helical transmembrane segment spans residues 1311 to 1328 (VNLVLALIYNMVGIPIAA). The Extracellular portion of the chain corresponds to 1329–1339 (GVFMPIGIVLQ). Residues 1340-1357 (PWMGSAAASSVSVVLSSL) traverse the membrane as a helical segment. The Cytoplasmic segment spans residues 1358–1451 (QLKCYRKPDL…LSDRDEEQCI (94 aa)). Serine 1384 and serine 1443 each carry phosphoserine.

Belongs to the cation transport ATPase (P-type) (TC 3.A.3) family. Type IB subfamily. Monomer. Interacts with COMMD1/MURR1. Interacts with DCTN4, in a copper-dependent manner. Interacts with ATOX1. Interacts (via C-terminus) with ZBTB16/PLZF. As to expression, expressed in brain, liver, kidney, spleen and stomach. In brain, detected in neuronal cells of the hippocampal formation, olfactory bulbs, cerebellum, cerebral cortex and nuclei in the brainstem. Isoform PINA is expressed during night in adult pineal gland (pinealocytes) and retina. Isoform PINA is not detected in other tissue.

Its subcellular location is the golgi apparatus. It localises to the trans-Golgi network membrane. The protein localises to the late endosome. The catalysed reaction is Cu(+)(in) + ATP + H2O = Cu(+)(out) + ADP + phosphate + H(+). Functionally, copper ion transmembrane transporter involved in the export of copper out of the cells, such as the efflux of hepatic copper into the bile. This Rattus norvegicus (Rat) protein is Copper-transporting ATPase 2 (Atp7b).